The following is a 2298-amino-acid chain: Protein Ycf2 (2298 aa).

1637 to 1644 (GSIGTGRS) serves as a coordination point for ATP.

It belongs to the Ycf2 family.

Its subcellular location is the plastid. The protein resides in the chloroplast stroma. Probable ATPase of unknown function. Its presence in a non-photosynthetic plant (Epifagus virginiana) and experiments in tobacco indicate that it has an essential function which is probably not related to photosynthesis. In Lotus japonicus (Lotus corniculatus var. japonicus), this protein is Protein Ycf2.